A 233-amino-acid polypeptide reads, in one-letter code: Small ribosomal subunit protein uS7m (233 aa).

A mitochondrion-targeting transit peptide spans 1–28 (MAAPTAAGLCPRLRAWLPRLTQVRWSRY).

The protein belongs to the universal ribosomal protein uS7 family. Component of the mitochondrial ribosome small subunit (28S) which comprises a 12S rRNA and about 30 distinct proteins.

Its subcellular location is the mitochondrion. In Gallus gallus (Chicken), this protein is Small ribosomal subunit protein uS7m (MRPS7).